We begin with the raw amino-acid sequence, 514 residues long: Na(+)/H(+) antiporter NhaB (514 aa).

Transmembrane regions (helical) follow at residues 21–41 (LAIV…SPFI), 43–63 (GWLL…CYPL), 88–108 (IMAN…IFFM), 143–163 (FLDA…FYGV), 203–223 (LMMH…VGEP), 239–259 (FFLR…LTCF), 304–324 (ALIA…VGLI), 349–369 (QESL…AVII), 390–410 (LALF…VFVA), 448–468 (ATPN…SPLI), and 484–504 (IVLS…ATIW).

It belongs to the NhaB Na(+)/H(+) (TC 2.A.34) antiporter family.

Its subcellular location is the cell inner membrane. The enzyme catalyses 2 Na(+)(in) + 3 H(+)(out) = 2 Na(+)(out) + 3 H(+)(in). Its function is as follows. Na(+)/H(+) antiporter that extrudes sodium in exchange for external protons. This Haemophilus influenzae (strain 86-028NP) protein is Na(+)/H(+) antiporter NhaB.